The chain runs to 254 residues: Alcohol dehydrogenase (254 aa).

Position 10–33 (10–33 (FVAGLGGIGLDTSRELVKRNLKNL)) interacts with NAD(+). Residue serine 138 participates in substrate binding. The active-site Proton acceptor is the tyrosine 151.

It belongs to the short-chain dehydrogenases/reductases (SDR) family. In terms of assembly, homodimer.

The catalysed reaction is a primary alcohol + NAD(+) = an aldehyde + NADH + H(+). It catalyses the reaction a secondary alcohol + NAD(+) = a ketone + NADH + H(+). The sequence is that of Alcohol dehydrogenase (Adh) from Drosophila persimilis (Fruit fly).